The chain runs to 270 residues: Putative envelope-preserving system protein Rv2743c (270 aa).

Transmembrane regions (helical) follow at residues 50–72 (ALRW…ALLA) and 77–99 (FTSL…TLLL).

Interacts with PspA and Rv2742c.

It localises to the membrane. Involved in preservation of envelope integrity and tolerance to surface stress. Reverses the inhibitory effect of PspA on ClgR activity. Facilitates intracellular growth of M.tuberculosis. The polypeptide is Putative envelope-preserving system protein Rv2743c (Mycobacterium tuberculosis (strain ATCC 25618 / H37Rv)).